A 217-amino-acid polypeptide reads, in one-letter code: Cytokinin riboside 5'-monophosphate phosphoribohydrolase LOG7 (217 aa).

Substrate-binding positions include Glu79, 97–98 (RK), 114–120 (GYGTLEE), and Thr126.

This sequence belongs to the LOG family. As to expression, expressed in roots and shoots. Detected in the epidermis of the root elongation zone, cotyledon and leaves, in trichomes and pollen.

Its subcellular location is the cytoplasm. The protein resides in the nucleus. It catalyses the reaction N(6)-(dimethylallyl)adenosine 5'-phosphate + H2O = N(6)-dimethylallyladenine + D-ribose 5-phosphate. It carries out the reaction 9-ribosyl-trans-zeatin 5'-phosphate + H2O = trans-zeatin + D-ribose 5-phosphate. Functionally, cytokinin-activating enzyme working in the direct activation pathway. Phosphoribohydrolase that converts inactive cytokinin nucleotides to the biologically active free-base forms. This chain is Cytokinin riboside 5'-monophosphate phosphoribohydrolase LOG7 (LOG7), found in Arabidopsis thaliana (Mouse-ear cress).